A 601-amino-acid chain; its full sequence is NAD(+)--arginine ADP-ribosyltransferase Chelt (601 aa).

The signal sequence occupies residues methionine 1–alanine 18. NAD(+)-binding positions include alanine 26–arginine 43 and glutamate 130. Glutamate 130 is a catalytic residue. Residues cysteine 205 and cysteine 220 are joined by a disulfide bond.

The protein belongs to the enterotoxin A family.

Its subcellular location is the secreted. The catalysed reaction is L-arginyl-[protein] + NAD(+) = N(omega)-(ADP-D-ribosyl)-L-arginyl-[protein] + nicotinamide + H(+). A probable mono(ADP-ribosyl)transferase, it may ADP-ribosylate Arg in target protein(s). Upon expression in yeast cells causes cell death. This is NAD(+)--arginine ADP-ribosyltransferase Chelt from Vibrio cholerae.